A 118-amino-acid chain; its full sequence is Melanoma antigen recognized by T-cells 1 (118 aa).

The chain crosses the membrane as a helical span at residues 27 to 47; that stretch reads AAGIGILTVILGVLLLIGCWY. The Cytoplasmic portion of the chain corresponds to 48 to 118; sequence CRRRNGYRAL…AEQSPPPYSP (71 aa). Positions 78 to 118 are disordered; the sequence is GFDHRDSKVSLQEKNCEPVVPNAPPAYEKLSAEQSPPPYSP. Residue serine 108 is modified to Phosphoserine.

As to quaternary structure, interacts with PMEL. Interacts with GPR143. In terms of processing, acylated. Expression is restricted to melanoma and melanocyte cell lines and retina.

The protein resides in the endoplasmic reticulum membrane. It is found in the golgi apparatus. The protein localises to the trans-Golgi network membrane. Its subcellular location is the melanosome. In terms of biological role, involved in melanosome biogenesis by ensuring the stability of GPR143. Plays a vital role in the expression, stability, trafficking, and processing of melanocyte protein PMEL, which is critical to the formation of stage II melanosomes. The protein is Melanoma antigen recognized by T-cells 1 (MLANA) of Homo sapiens (Human).